The chain runs to 84 residues: Large ribosomal subunit protein bL27 (84 aa).

The disordered stretch occupies residues 1–21 (MAHKKGGGSTKNGRDSNPQYL).

This sequence belongs to the bacterial ribosomal protein bL27 family.

In Chloroherpeton thalassium (strain ATCC 35110 / GB-78), this protein is Large ribosomal subunit protein bL27.